We begin with the raw amino-acid sequence, 309 residues long: Homoserine kinase (309 aa).

Pro-91 to Cys-101 serves as a coordination point for ATP.

The protein belongs to the GHMP kinase family. Homoserine kinase subfamily.

Its subcellular location is the cytoplasm. It catalyses the reaction L-homoserine + ATP = O-phospho-L-homoserine + ADP + H(+). The protein operates within amino-acid biosynthesis; L-threonine biosynthesis; L-threonine from L-aspartate: step 4/5. Catalyzes the ATP-dependent phosphorylation of L-homoserine to L-homoserine phosphate. In Klebsiella pneumoniae subsp. pneumoniae (strain ATCC 700721 / MGH 78578), this protein is Homoserine kinase.